An 89-amino-acid chain; its full sequence is Mu-theraphotoxin-Phlo1a (89 aa).

A signal peptide spans 1–22; it reads MKVSVLITLAVLGVMFVWTSAA. A propeptide spanning residues 23–52 is cleaved from the precursor; it reads EQEDHGSDRRDSPALLKNLLGEEVFQSEER. Cystine bridges form between C54-C68, C61-C73, and C67-C81. The residue at position 87 (I87) is an Isoleucine amide.

Belongs to the neurotoxin 10 (Hwtx-1) family. 39 (Jztx-34) subfamily. Expressed by the venom gland.

The protein localises to the secreted. In terms of biological role, gating-modifier toxin that inhibits voltage-gated sodium channel Nav by shifting the threshold for channel activation to more positive potentials. This toxin moderately inhibits human Nav1.7/SCN9A (IC(50)=459 nM) and weakly inhibits hNav1.2/SCN2A and hNav1.5/SCN5A (&lt;20% inhibition at 1 uM peptide). Inhibition of Nav1.7 is voltage-dependent, with lower inhibition at more positive test pulses. This chain is Mu-theraphotoxin-Phlo1a, found in Phlogius sp. (Tarantula spider).